The sequence spans 51 residues: ATP synthase protein 8 (51 aa).

Residues 7 to 27 (LNWAMMTIMFSLSLLVSMIIL) traverse the membrane as a helical segment.

This sequence belongs to the ATPase protein 8 family. In terms of assembly, F-type ATPases have 2 components, CF(1) - the catalytic core - and CF(0) - the membrane proton channel.

It is found in the mitochondrion membrane. Mitochondrial membrane ATP synthase (F(1)F(0) ATP synthase or Complex V) produces ATP from ADP in the presence of a proton gradient across the membrane which is generated by electron transport complexes of the respiratory chain. F-type ATPases consist of two structural domains, F(1) - containing the extramembraneous catalytic core and F(0) - containing the membrane proton channel, linked together by a central stalk and a peripheral stalk. During catalysis, ATP synthesis in the catalytic domain of F(1) is coupled via a rotary mechanism of the central stalk subunits to proton translocation. Part of the complex F(0) domain. Minor subunit located with subunit a in the membrane. The chain is ATP synthase protein 8 (MT-ATP8) from Limulus polyphemus (Atlantic horseshoe crab).